The sequence spans 116 residues: Large ribosomal subunit protein uL18 (116 aa).

Belongs to the universal ribosomal protein uL18 family. As to quaternary structure, part of the 50S ribosomal subunit; part of the 5S rRNA/L5/L18/L25 subcomplex. Contacts the 5S and 23S rRNAs.

In terms of biological role, this is one of the proteins that bind and probably mediate the attachment of the 5S RNA into the large ribosomal subunit, where it forms part of the central protuberance. The chain is Large ribosomal subunit protein uL18 from Shewanella loihica (strain ATCC BAA-1088 / PV-4).